Here is a 422-residue protein sequence, read N- to C-terminus: Histidinol dehydrogenase (422 aa).

NAD(+) contacts are provided by tyrosine 123, glutamine 183, and asparagine 206. 3 residues coordinate substrate: serine 229, glutamine 251, and histidine 254. Zn(2+) contacts are provided by glutamine 251 and histidine 254. Residues glutamate 320 and histidine 321 each act as proton acceptor in the active site. Positions 321, 354, 408, and 413 each coordinate substrate. Aspartate 354 provides a ligand contact to Zn(2+). Histidine 413 is a Zn(2+) binding site.

The protein belongs to the histidinol dehydrogenase family. The cofactor is Zn(2+).

The catalysed reaction is L-histidinol + 2 NAD(+) + H2O = L-histidine + 2 NADH + 3 H(+). It participates in amino-acid biosynthesis; L-histidine biosynthesis; L-histidine from 5-phospho-alpha-D-ribose 1-diphosphate: step 9/9. Its function is as follows. Catalyzes the sequential NAD-dependent oxidations of L-histidinol to L-histidinaldehyde and then to L-histidine. The sequence is that of Histidinol dehydrogenase from Haloarcula marismortui (strain ATCC 43049 / DSM 3752 / JCM 8966 / VKM B-1809) (Halobacterium marismortui).